The sequence spans 212 residues: MPGYVLTYFPVRGRAEPIRLLLADQGISWKEDEVQIPDWFSGKDARKKEAVFGQLPQFQDGDYVLYQSNSILRYLGNKHGLTGANDEERGHIDMVNDGVEDLRQKYGRLIFFEYETGKDKYLKELPSQLDFFERILSKNANGSKFVVGQKISFADYNLLDILQCHLDLCSKSLSAYPLLTAYVERLVARPKISEYLKSDARNKRPITPKHKK.

A GST N-terminal domain is found at 2 to 83 (PGYVLTYFPV…YLGNKHGLTG (82 aa)). Glutathione-binding positions include Y8, R14, W39, K47, 54–55 (QL), and 67–68 (QS). In terms of domain architecture, GST C-terminal spans 85–206 (NDEERGHIDM…KSDARNKRPI (122 aa)).

It belongs to the GST superfamily. Pi family. In terms of assembly, homodimer. Expressed only in embryos. Not expressed in liver, lung, heart, kidney and ovary.

Its subcellular location is the cytoplasm. It is found in the mitochondrion. It localises to the nucleus. The enzyme catalyses RX + glutathione = an S-substituted glutathione + a halide anion + H(+). Functionally, conjugation of reduced glutathione to a wide number of exogenous and endogenous hydrophobic electrophiles. Highly active towards 1-chloro-2,4-dinitrobenzene and organic isothiocyanates, but shows no detectable activity towards 1,2-dichloro-4-nitrobenzene, p-nitrobenzylchloride, trans-4-phenyl-3-buten-2-one (tPBO) and ethacrynic acid. May be associated with cellular proliferation. This is Glutathione S-transferase P 1 (gstp1) from Xenopus laevis (African clawed frog).